Consider the following 132-residue polypeptide: Small ribosomal subunit protein uS8 (132 aa).

It belongs to the universal ribosomal protein uS8 family. As to quaternary structure, part of the 30S ribosomal subunit. Contacts proteins S5 and S12.

One of the primary rRNA binding proteins, it binds directly to 16S rRNA central domain where it helps coordinate assembly of the platform of the 30S subunit. The polypeptide is Small ribosomal subunit protein uS8 (Clostridium acetobutylicum (strain ATCC 824 / DSM 792 / JCM 1419 / IAM 19013 / LMG 5710 / NBRC 13948 / NRRL B-527 / VKM B-1787 / 2291 / W)).